The following is a 248-amino-acid chain: Protein maestro (248 aa).

The segment at 1–21 is disordered; sequence MDQRQRRILGQPLSIPTSQPK. Residues 128 to 163 form an HEAT repeat; that stretch reads SFFIDITLQTRTLLDDENDSLRYSAFVLFGQLAAFA.

As to expression, ubiquitous.

It localises to the nucleus. Its subcellular location is the nucleolus. This is Protein maestro (MRO) from Homo sapiens (Human).